A 182-amino-acid polypeptide reads, in one-letter code: Caltractin ICL1b (182 aa).

The disordered stretch occupies residues 1-31; the sequence is MSRRGQQPPPQQQQAPPQKNQAGKFNPAEFV. 4 EF-hand domains span residues 38-73, 74-109, 111-146, and 147-182; these read EEVL…LGFE, AKNQ…RISE, DSKA…LGET, and MDDS…KTFA. Ca(2+) is bound by residues D51, D53, T55, S57, E62, D87, D89, S91, Q93, and E98.

Belongs to the centrin family.

The protein localises to the cytoplasm. It localises to the cytoskeleton. Plays a fundamental role in microtubule organizing center structure and function. Component of the infraciliary lattice (ICL) and the ciliary basal bodies. This is Caltractin ICL1b (Icl1b) from Paramecium tetraurelia.